A 1159-amino-acid polypeptide reads, in one-letter code: Anillin-like protein 1 (1159 aa).

5 disordered regions span residues 43-81 (VASP…MKEN), 266-327 (QQVS…TKTT), 409-430 (KLKK…APVP), 549-608 (AIPK…GDVI), and 629-699 (FGFM…KSSS). Polar residues predominate over residues 50–60 (FGSSSKCNDGP). A compositionally biased stretch (low complexity) spans 287 to 327 (ASSATSSSSSTTTLTTISGASGSTTSGISNAPQDSASTKTT). Over residues 421 to 430 (PPAPTSAPVP) the composition is skewed to pro residues. The span at 564–584 (SASSLYSQGARSNTASPASKS) shows a compositional bias: polar residues. Positions 660–684 (VIEEETENEDESEPYEPEEEEDDDA) are enriched in acidic residues. Residues 1029–1147 (DITYHGFLSM…WLSLINSTSK (119 aa)) enclose the PH domain.

Strongly expressed in dividing neuroblasts under the ventral epidermal cells during ventral enclosure.

It is found in the cytoplasm. It localises to the cell cortex. Its subcellular location is the cytoskeleton. The protein localises to the spindle. The protein resides in the midbody. It is found in the cleavage furrow. Functionally, required for contractile events in embryos that occur prior to mitosis, such as cortical ruffling and pseudocleavage. Promotes membrane ruffling by organizing cortical patches of septins and myosin II. Not generally required for cytokinesis in mitotic cells. Required for the asymmetric cleavage events that extrude the two polar bodies during oocyte meiosis. Not required for meiotic contractile ring assembly, initiation or closure but is required for the transformation of the contractile ring from a disk above the spindle to a tube around the spindle midzone. Promotes astral microtubule-directed cortical myosin polarization and cleavage furrow ingression. Regulates neuroblast cytokinesis during mid- to late-embryogenesis and is required for ventral enclosure. This chain is Anillin-like protein 1 (ani-1), found in Caenorhabditis elegans.